We begin with the raw amino-acid sequence, 401 residues long: Imidazolonepropionase (401 aa).

2 residues coordinate Fe(3+): His-70 and His-72. Residues His-70 and His-72 each coordinate Zn(2+). Residues Arg-79, Tyr-142, and His-175 each coordinate 4-imidazolone-5-propanoate. Tyr-142 is a binding site for N-formimidoyl-L-glutamate. A Fe(3+)-binding site is contributed by His-240. His-240 contributes to the Zn(2+) binding site. Residue Gln-243 coordinates 4-imidazolone-5-propanoate. Asp-315 is a binding site for Fe(3+). Asp-315 provides a ligand contact to Zn(2+). N-formimidoyl-L-glutamate-binding residues include Asn-317 and Gly-319. Ser-320 contacts 4-imidazolone-5-propanoate.

It belongs to the metallo-dependent hydrolases superfamily. HutI family. Zn(2+) is required as a cofactor. The cofactor is Fe(3+).

The protein localises to the cytoplasm. The catalysed reaction is 4-imidazolone-5-propanoate + H2O = N-formimidoyl-L-glutamate. It participates in amino-acid degradation; L-histidine degradation into L-glutamate; N-formimidoyl-L-glutamate from L-histidine: step 3/3. Its function is as follows. Catalyzes the hydrolytic cleavage of the carbon-nitrogen bond in imidazolone-5-propanoate to yield N-formimidoyl-L-glutamate. It is the third step in the universal histidine degradation pathway. The chain is Imidazolonepropionase from Ruegeria pomeroyi (strain ATCC 700808 / DSM 15171 / DSS-3) (Silicibacter pomeroyi).